The following is a 48-amino-acid chain: MPQLVPFFFVNQVVFAFIVLTVLIYAFSKYILPRLLRTYISRIYINKL.

Residues 4–24 (LVPFFFVNQVVFAFIVLTVLI) form a helical membrane-spanning segment.

The protein belongs to the ATPase protein 8 family. In terms of assembly, F-type ATPases have 2 components, CF(1) - the catalytic core - and CF(0) - the membrane proton channel.

The protein resides in the mitochondrion membrane. Mitochondrial membrane ATP synthase (F(1)F(0) ATP synthase or Complex V) produces ATP from ADP in the presence of a proton gradient across the membrane which is generated by electron transport complexes of the respiratory chain. F-type ATPases consist of two structural domains, F(1) - containing the extramembraneous catalytic core and F(0) - containing the membrane proton channel, linked together by a central stalk and a peripheral stalk. During catalysis, ATP synthesis in the catalytic domain of F(1) is coupled via a rotary mechanism of the central stalk subunits to proton translocation. Part of the complex F(0) domain. Minor subunit located with subunit a in the membrane. The chain is ATP synthase protein 8 (atp8) from Emericella nidulans (Aspergillus nidulans).